The primary structure comprises 464 residues: tRNA modification GTPase MnmE (464 aa).

Arg-25, Glu-87, and Lys-130 together coordinate (6S)-5-formyl-5,6,7,8-tetrahydrofolate. One can recognise a TrmE-type G domain in the interval 226–386; it reads GLSVVLAGQP…LRAELLRIAG (161 aa). Asn-236 provides a ligand contact to K(+). GTP contacts are provided by residues 236–241, 255–261, and 280–283; these read NVGKSS, TPIAGTT, and DTAG. Residue Ser-240 coordinates Mg(2+). K(+) contacts are provided by Thr-255, Ile-257, and Thr-260. Thr-261 provides a ligand contact to Mg(2+). Lys-464 contacts (6S)-5-formyl-5,6,7,8-tetrahydrofolate.

Belongs to the TRAFAC class TrmE-Era-EngA-EngB-Septin-like GTPase superfamily. TrmE GTPase family. Homodimer. Heterotetramer of two MnmE and two MnmG subunits. The cofactor is K(+).

It is found in the cytoplasm. In terms of biological role, exhibits a very high intrinsic GTPase hydrolysis rate. Involved in the addition of a carboxymethylaminomethyl (cmnm) group at the wobble position (U34) of certain tRNAs, forming tRNA-cmnm(5)s(2)U34. This Burkholderia orbicola (strain MC0-3) protein is tRNA modification GTPase MnmE.